A 117-amino-acid chain; its full sequence is Conotoxin vil14.3 (117 aa).

Positions Met1 to Ser22 are cleaved as a signal peptide. Positions Glu23–Arg90 are excised as a propeptide. Positions Arg53 to Pro79 are disordered. The span at Arg62 to Pro79 shows a compositional bias: basic and acidic residues. Cystine bridges form between Cys96–Cys116 and Cys100–Cys112.

This sequence belongs to the conotoxin R superfamily. Expressed by the venom duct.

The protein localises to the secreted. The polypeptide is Conotoxin vil14.3 (Conus villepinii (Villepin's cone)).